The following is an 88-amino-acid chain: MSKGHSLQDPYLNVLRKERVPVSIYLVNGIKLQGQVESFDQFVVLLKNTVSQMVYKHAISTVVPSRAVRVPLLNEAGGAEGEEDEQAE.

The Sm domain occupies 9–68 (DPYLNVLRKERVPVSIYLVNGIKLQGQVESFDQFVVLLKNTVSQMVYKHAISTVVPSRAV).

This sequence belongs to the Hfq family. Homohexamer.

Functionally, RNA chaperone that binds small regulatory RNA (sRNAs) and mRNAs to facilitate mRNA translational regulation in response to envelope stress, environmental stress and changes in metabolite concentrations. Also binds with high specificity to tRNAs. The polypeptide is RNA-binding protein Hfq (Cellvibrio japonicus (strain Ueda107) (Pseudomonas fluorescens subsp. cellulosa)).